Consider the following 380-residue polypeptide: Probable dual-specificity RNA methyltransferase RlmN (380 aa).

The Proton acceptor role is filled by E123. Residues 129–362 enclose the Radical SAM core domain; sequence HEYGNSVCVT…VTIRREQGSD (234 aa). C136 and C367 are disulfide-bonded. Positions 143, 147, and 150 each coordinate [4Fe-4S] cluster. S-adenosyl-L-methionine is bound by residues 193 to 194, S225, 248 to 250, and N324; these read GE and SLH. The active-site S-methylcysteine intermediate is C367.

It belongs to the radical SAM superfamily. RlmN family. The cofactor is [4Fe-4S] cluster.

The protein localises to the cytoplasm. It carries out the reaction adenosine(2503) in 23S rRNA + 2 reduced [2Fe-2S]-[ferredoxin] + 2 S-adenosyl-L-methionine = 2-methyladenosine(2503) in 23S rRNA + 5'-deoxyadenosine + L-methionine + 2 oxidized [2Fe-2S]-[ferredoxin] + S-adenosyl-L-homocysteine. The catalysed reaction is adenosine(37) in tRNA + 2 reduced [2Fe-2S]-[ferredoxin] + 2 S-adenosyl-L-methionine = 2-methyladenosine(37) in tRNA + 5'-deoxyadenosine + L-methionine + 2 oxidized [2Fe-2S]-[ferredoxin] + S-adenosyl-L-homocysteine. Its function is as follows. Specifically methylates position 2 of adenine 2503 in 23S rRNA and position 2 of adenine 37 in tRNAs. This is Probable dual-specificity RNA methyltransferase RlmN from Lysinibacillus sphaericus (strain C3-41).